Reading from the N-terminus, the 545-residue chain is CTP synthase (545 aa).

Residues 1-266 form an amidoligase domain region; it reads MATNYIFVTG…DTFVCDRFRL (266 aa). Position 14 (Ser14) interacts with CTP. A UTP-binding site is contributed by Ser14. Residues 15 to 20 and Asp72 contribute to the ATP site; that span reads SLGKGI. The Mg(2+) site is built by Asp72 and Glu140. Residues 147–149, 187–192, and Lys223 contribute to the CTP site; these read DIE and KTKPTQ. Residues 187 to 192 and Lys223 each bind UTP; that span reads KTKPTQ. Residue 239 to 241 participates in ATP binding; that stretch reads KDV. In terms of domain architecture, Glutamine amidotransferase type-1 spans 291–542; the sequence is TIGMVGKYVE…VAAAKAYQDS (252 aa). Residue Gly352 participates in L-glutamine binding. The active-site Nucleophile; for glutamine hydrolysis is the Cys379. Residues 380–383, Glu403, and Arg470 each bind L-glutamine; that span reads LGMQ. Active-site residues include His515 and Glu517.

This sequence belongs to the CTP synthase family. In terms of assembly, homotetramer.

It carries out the reaction UTP + L-glutamine + ATP + H2O = CTP + L-glutamate + ADP + phosphate + 2 H(+). The catalysed reaction is L-glutamine + H2O = L-glutamate + NH4(+). The enzyme catalyses UTP + NH4(+) + ATP = CTP + ADP + phosphate + 2 H(+). Its pathway is pyrimidine metabolism; CTP biosynthesis via de novo pathway; CTP from UDP: step 2/2. Its activity is regulated as follows. Allosterically activated by GTP, when glutamine is the substrate; GTP has no effect on the reaction when ammonia is the substrate. The allosteric effector GTP functions by stabilizing the protein conformation that binds the tetrahedral intermediate(s) formed during glutamine hydrolysis. Inhibited by the product CTP, via allosteric rather than competitive inhibition. Catalyzes the ATP-dependent amination of UTP to CTP with either L-glutamine or ammonia as the source of nitrogen. Regulates intracellular CTP levels through interactions with the four ribonucleotide triphosphates. The chain is CTP synthase from Actinobacillus pleuropneumoniae serotype 5b (strain L20).